The sequence spans 418 residues: NADH-quinone oxidoreductase subunit D (418 aa).

This sequence belongs to the complex I 49 kDa subunit family. As to quaternary structure, NDH-1 is composed of 14 different subunits. Subunits NuoB, C, D, E, F, and G constitute the peripheral sector of the complex.

The protein localises to the cell inner membrane. The enzyme catalyses a quinone + NADH + 5 H(+)(in) = a quinol + NAD(+) + 4 H(+)(out). NDH-1 shuttles electrons from NADH, via FMN and iron-sulfur (Fe-S) centers, to quinones in the respiratory chain. The immediate electron acceptor for the enzyme in this species is believed to be ubiquinone. Couples the redox reaction to proton translocation (for every two electrons transferred, four hydrogen ions are translocated across the cytoplasmic membrane), and thus conserves the redox energy in a proton gradient. The sequence is that of NADH-quinone oxidoreductase subunit D from Neisseria meningitidis serogroup C / serotype 2a (strain ATCC 700532 / DSM 15464 / FAM18).